The following is a 77-amino-acid chain: U14-theraphotoxin-Cg1c (77 aa).

Residues 1-21 (MNTSDPPAVLRIAAITLLCTA) form the signal peptide. The propeptide occupies 22–49 (SESVEQNPLIPFENAVLGSYAKMASEKR). Disulfide bonds link Cys-50-Cys-64 and Cys-57-Cys-69.

Belongs to the neurotoxin 10 (Hwtx-1) family. 65 (Jztx-21) subfamily. As to expression, expressed by the venom gland.

It is found in the secreted. Its function is as follows. Probable ion channel inhibitor. This is U14-theraphotoxin-Cg1c from Chilobrachys guangxiensis (Chinese earth tiger tarantula).